The sequence spans 824 residues: Sphingomyelin phosphodiesterase 4 (824 aa).

The helical transmembrane segment at 777–797 threads the bilayer; sequence LAFLFIFYILGSLLSLGPLIC.

The cofactor is Mg(2+).

It localises to the endoplasmic reticulum membrane. It is found in the golgi apparatus membrane. The protein localises to the nucleus envelope. Its subcellular location is the cell membrane. The protein resides in the sarcolemma. It carries out the reaction a sphingomyelin + H2O = phosphocholine + an N-acylsphing-4-enine + H(+). Catalyzes the hydrolysis of membrane sphingomyelin to form phosphorylcholine and ceramide. It has a relevant role in the homeostasis of membrane sphingolipids, thereby influencing membrane integrity, and endoplasmic reticulum organization and function. May sensitize cells to DNA damage-induced apoptosis. This is Sphingomyelin phosphodiesterase 4 (smpd4) from Xenopus laevis (African clawed frog).